Reading from the N-terminus, the 149-residue chain is Vesicle-associated protein 3-1 (149 aa).

An N-acetylmethionine modification is found at Met1. Position 2 is an N-acetylserine; in Vesicle-associated protein 3-1, N-terminally processed (Ser2). An MSP domain is found at 6-126; it reads LLEIEPMYLQ…EETKLRVTYV (121 aa).

The protein belongs to the VAMP-associated protein (VAP) (TC 9.B.17) family.

Its function is as follows. May play a role in vesicle trafficking. In Arabidopsis thaliana (Mouse-ear cress), this protein is Vesicle-associated protein 3-1 (PVA31).